The chain runs to 345 residues: Sesquiterpene synthase GALMADRAFT_104215 (345 aa).

The Mg(2+) site is built by Asp91, Asn226, Ser230, and Glu234. The DDXXD motif motif lies at 91–95; it reads DEFTD. Residues Arg316 and Tyr317 each contribute to the (2E,6E)-farnesyl diphosphate site.

It belongs to the terpene synthase family. Mg(2+) serves as cofactor.

It carries out the reaction (2E,6E)-farnesyl diphosphate = beta-gurjunene + diphosphate. Functionally, terpene cyclase that catalyzes the cyclization of farnesyl diphosphate (FPP) to beta-gurjunene. In Galerina marginata (strain CBS 339.88), this protein is Sesquiterpene synthase GALMADRAFT_104215.